We begin with the raw amino-acid sequence, 299 residues long: Acidic endochitinase Pun g 14, amyloplastic (299 aa).

An amyloplast-targeting transit peptide spans 1–26 (MAKTLPFSRALLLSLSILLVARAISA). The region spanning 27 to 299 (GDIAIYWGQN…TYSTTIKDQV (273 aa)) is the GH18 domain. Cystine bridges form between C46–C93 and C76–C83. E153 serves as the catalytic Proton donor. C185 and C216 form a disulfide bridge.

The protein belongs to the glycosyl hydrolase 18 family. Chitinase class III subfamily. Monomer. Highly expressed in seeds and to a lesser extent in the skin of the pomegranate fruit (at protein level). Not expressed in leaves or flesh of the fruit (at protein level).

The protein resides in the plastid. Its subcellular location is the amyloplast. The enzyme catalyses Random endo-hydrolysis of N-acetyl-beta-D-glucosaminide (1-&gt;4)-beta-linkages in chitin and chitodextrins.. Activity is not affected by addition of 10 mM Ca(2+) or removal of Ca(2+). Hydrolyzes chitin. Probable calcium storage protein of the seeds. Binds calcium ions with high capacity and low affinity. Involved in seed germination. The protein is Acidic endochitinase Pun g 14, amyloplastic of Punica granatum (Pomegranate).